The primary structure comprises 481 residues: uncharacterized protein (481 aa).

This sequence belongs to the UbiD family.

This is an uncharacterized protein from Archaeoglobus fulgidus (strain ATCC 49558 / DSM 4304 / JCM 9628 / NBRC 100126 / VC-16).